Here is a 796-residue protein sequence, read N- to C-terminus: Ent-copalyl diphosphate synthase 4 (796 aa).

The transit peptide at 1 to 23 (MSSSSIVTSLLRPTTAADGVLPR) directs the protein to the chloroplast. Lys-240 contributes to the substrate binding site. Mg(2+)-binding residues include Asp-371 and Asp-373. The DXDD motif signature appears at 371–374 (DVDD). Substrate is bound at residue Lys-457.

It belongs to the terpene synthase family. Tpsc subfamily. Mg(2+) is required as a cofactor. As to expression, highly expressed in leaves, and, at low levels, in stems, but barely in roots and flowers.

Its subcellular location is the plastid. The protein localises to the chloroplast. It catalyses the reaction (2E,6E,10E)-geranylgeranyl diphosphate = ent-copalyl diphosphate. It participates in secondary metabolite biosynthesis; terpenoid biosynthesis. Involved in the biosynthesis of ent-kaurene diterpenoids natural products such as oridonin, miltiradiene, eriocalyxin B and nezukol, known to exhibit antitumor, anti-inflammatory and antibacterial activities. Catalyzes the conversion of (2E,6E,10E)-geranylgeranyl diphosphate (GGPP) to ent-copalyl diphosphate (ent-CPP). The sequence is that of Ent-copalyl diphosphate synthase 4 from Isodon rubescens (Rabdosia rubescens).